A 307-amino-acid chain; its full sequence is Elongation factor Ts (307 aa).

The interval 80-83 (TDFV) is involved in Mg(2+) ion dislocation from EF-Tu.

Belongs to the EF-Ts family.

Its subcellular location is the cytoplasm. Functionally, associates with the EF-Tu.GDP complex and induces the exchange of GDP to GTP. It remains bound to the aminoacyl-tRNA.EF-Tu.GTP complex up to the GTP hydrolysis stage on the ribosome. The sequence is that of Elongation factor Ts from Rhizorhabdus wittichii (strain DSM 6014 / CCUG 31198 / JCM 15750 / NBRC 105917 / EY 4224 / RW1) (Sphingomonas wittichii).